Here is a 312-residue protein sequence, read N- to C-terminus: Ribosomal protein L11 methyltransferase (312 aa).

Residues threonine 160, glycine 181, aspartate 203, and asparagine 246 each coordinate S-adenosyl-L-methionine.

Belongs to the methyltransferase superfamily. PrmA family.

Its subcellular location is the cytoplasm. The catalysed reaction is L-lysyl-[protein] + 3 S-adenosyl-L-methionine = N(6),N(6),N(6)-trimethyl-L-lysyl-[protein] + 3 S-adenosyl-L-homocysteine + 3 H(+). In terms of biological role, methylates ribosomal protein L11. The protein is Ribosomal protein L11 methyltransferase of Staphylococcus aureus (strain JH1).